A 260-amino-acid chain; its full sequence is Carbonic anhydrase 2 (260 aa).

Ser-2 carries the post-translational modification N-acetylserine. At Ser-2 the chain carries Phosphoserine. The Alpha-carbonic anhydrase domain occupies 3–259; sequence HHWGYSKSNG…LKNRKIKASF (257 aa). Residues 16–39 are disordered; the sequence is WHKEFPIANGDRQSPVDIDTGTAQ. His-64 functions as the Proton donor/acceptor in the catalytic mechanism. At Ser-87 the chain carries Phosphoserine. Zn(2+) is bound by residues His-94, His-96, and His-119. Ser-165 bears the Phosphoserine mark. Residue 198-199 coordinates substrate; it reads TT. At Ser-232 the chain carries Phosphoserine.

Belongs to the alpha-carbonic anhydrase family. As to quaternary structure, interacts with SLC4A4 and SLC26A6. Interaction with SLC4A7 regulates SLC4A7 transporter activity. It depends on Zn(2+) as a cofactor.

It is found in the cytoplasm. It localises to the cell membrane. The catalysed reaction is hydrogencarbonate + H(+) = CO2 + H2O. The enzyme catalyses urea = cyanamide + H2O. With respect to regulation, inhibited by acetazolamide. Functionally, catalyzes the reversible hydration of carbon dioxide. Can also hydrate cyanamide to urea. Involved in the regulation of fluid secretion into the anterior chamber of the eye. Essential for bone resorption and osteoclast differentiation. Contributes to intracellular pH regulation in the duodenal upper villous epithelium during proton-coupled peptide absorption. Stimulates the chloride-bicarbonate exchange activity of SLC26A6. The sequence is that of Carbonic anhydrase 2 (Ca2) from Rattus norvegicus (Rat).